The following is a 1071-amino-acid chain: SLIT-ROBO Rho GTPase-activating protein 2 (1071 aa).

The region spanning 22–325 is the F-BAR domain; sequence KEIRAQLTEQ…AVENLDATSD (304 aa). Over residues 181-203 the composition is skewed to basic and acidic residues; the sequence is LKEAEKQEEKQIGKSVKQEDRQT. The disordered stretch occupies residues 181–211; that stretch reads LKEAEKQEEKQIGKSVKQEDRQTPRSPDSTA. Phosphoserine is present on Ser206. A coiled-coil region spans residues 362–401; sequence VQSELVQRCQQLQSRLSTLKIENEEVKKTMEATLQTIQDI. Residues Ser427, Ser500, Ser691, and Ser695 each carry the phosphoserine modification. One can recognise a Rho-GAP domain in the interval 489-679; sequence ARRSSTVRKQ…TIIIQHENIF (191 aa). Residues 698-726 are disordered; the sequence is DYCDSPHGETTSVEDSTQDVTAEHHTSDD. Residues 705 to 717 are compositionally biased toward polar residues; that stretch reads GETTSVEDSTQDV. Ser724 bears the Phosphoserine mark. An SH3 domain is found at 728-787; that stretch reads CEPIEAIAKFDYVGRTARELSFKKGASLLLYQRASDDWWEGRHNGIDGLIPHQYIVVQDT. Position 795 is a phosphoserine (Ser795). Residues 837–936 form a disordered region; sequence QRKRPESGSI…RSKSFNNHRP (100 aa). Positions 855 to 866 are enriched in low complexity; the sequence is HGLSSSLTDSSS. Composition is skewed to polar residues over residues 874 to 885 and 897 to 907; these read RPSSQPIMSQSL and GHGSLNSISRH. Phosphoserine is present on Ser916. Residues 919–933 show a composition bias toward polar residues; sequence IRKTATAGRSKSFNN. The residue at position 927 (Arg927) is a Symmetric dimethylarginine; by PRMT5. At Ser930 the chain carries Phosphoserine. Residues 940-967 adopt a coiled-coil conformation; it reads EVIAQDIEATMNSALNELRELERQSSVK. The interval 983–1012 is disordered; sequence SPVVAPTSEPSSPLHTQLLKDPEPAFQRSA. 4 positions are modified to phosphoserine: Ser990, Ser994, Ser1013, and Ser1027. The interval 1029–1071 is disordered; the sequence is KMAAPVKPPATRPKPTVFPKTNATSPGVNSSTSPQSTDKSCTV. Residues 1047–1071 show a composition bias toward polar residues; the sequence is PKTNATSPGVNSSTSPQSTDKSCTV.

As to quaternary structure, homodimer. Heterodimer; forms a heterodimer with SRGAP2C, altering SRGAP2 function. Forms a heterooligomer with SRGAP1 and SRGAP3 through its F-BAR domain. Interacts (via SH3 domain) with GPHN. Interacts (via SH3 domain) with FMNL1 (activated by RAC1); regulates the actin filament severing activity of FMNL1 and actin dynamics. Interacts (via SH3 domain) with FMNL3. Interacts with RAC1; specifically stimulates RAC1 GTPase activity. Interacts (via F-BAR domain) with HOMER1. Interacts with ROBO1 and ROBO2. Interacts with FASLG. Interacts with PRMT5. Post-translationally, methylation at Arg-927 is required for the stimulation of cell migration, dimerization and localization at the plasma membrane protrusions.

Its subcellular location is the cell membrane. The protein resides in the cell projection. The protein localises to the dendritic spine. It is found in the postsynaptic density. It localises to the postsynaptic cell membrane. Its subcellular location is the lamellipodium. The protein resides in the cytoplasmic vesicle. The protein localises to the phagosome. It is found in the nucleus. It localises to the cytoplasm. Its subcellular location is the cytosol. With respect to regulation, activity is strongly inhibited by SRGAP2C, which heterodimerize with SRGAP2/SRGAP2A, thereby reducing SRGAP2/SRGAP2A levels through proteasome-dependent degradation. Its function is as follows. Postsynaptic RAC1 GTPase activating protein (GAP) that plays a key role in neuronal morphogenesis and migration mainly during development of the cerebral cortex. Regulates excitatory and inhibitory synapse maturation and density in cortical pyramidal neurons. SRGAP2/SRGAP2A limits excitatory and inhibitory synapse density through its RAC1-specific GTPase activating activity, while it promotes maturation of both excitatory and inhibitory synapses through its ability to bind to the postsynaptic scaffolding protein HOMER1 at excitatory synapses, and the postsynaptic protein GPHN at inhibitory synapses. Mechanistically, acts by binding and deforming membranes, thereby regulating actin dynamics to regulate cell migration and differentiation. Promotes cell repulsion and contact inhibition of locomotion: localizes to protrusions with curved edges and controls the duration of RAC1 activity in contact protrusions. In non-neuronal cells, may also play a role in cell migration by regulating the formation of lamellipodia and filopodia. This chain is SLIT-ROBO Rho GTPase-activating protein 2, found in Homo sapiens (Human).